An 89-amino-acid chain; its full sequence is MARSLRKGPFVDEHLIKKVLAAQGNNDRKPIKTWSRRSVVVPEMIGLTIAVHNGRVHVPVSINENMVGHKLGEFAITRTFKGHFGDRKA.

It belongs to the universal ribosomal protein uS19 family.

Protein S19 forms a complex with S13 that binds strongly to the 16S ribosomal RNA. The chain is Small ribosomal subunit protein uS19 from Vesicomyosocius okutanii subsp. Calyptogena okutanii (strain HA).